The following is a 451-amino-acid chain: Adenylyltransferase and sulfurtransferase MOCS3-1 (451 aa).

The segment at 42-62 (GEDSDEAEESSNDMPTPQTKL) is disordered. Positions 43–52 (EDSDEAEESS) are enriched in acidic residues. Threonine 60 carries the phosphothreonine modification. ATP is bound by residues glycine 99, aspartate 120, 127-131 (SNLHR), lysine 144, and 188-189 (DN). Zn(2+)-binding residues include cysteine 229 and cysteine 232. Catalysis depends on cysteine 246, which acts as the Glycyl thioester intermediate; for adenylyltransferase activity. Zn(2+) is bound by residues cysteine 304 and cysteine 307. One can recognise a Rhodanese domain in the interval 353–449 (QSQPHLLLDV…WTGSVDATFP (97 aa)). The active-site Cysteine persulfide intermediate; for sulfurtransferase activity is cysteine 408.

The protein in the N-terminal section; belongs to the HesA/MoeB/ThiF family. UBA4 subfamily. Zn(2+) serves as cofactor.

It localises to the cytoplasm. The catalysed reaction is [molybdopterin-synthase sulfur-carrier protein]-C-terminal Gly-Gly + ATP + H(+) = [molybdopterin-synthase sulfur-carrier protein]-C-terminal Gly-Gly-AMP + diphosphate. It carries out the reaction [molybdopterin-synthase sulfur-carrier protein]-C-terminal Gly-Gly-AMP + S-sulfanyl-L-cysteinyl-[cysteine desulfurase] + AH2 = [molybdopterin-synthase sulfur-carrier protein]-C-terminal-Gly-aminoethanethioate + L-cysteinyl-[cysteine desulfurase] + A + AMP + 2 H(+). It functions in the pathway tRNA modification; 5-methoxycarbonylmethyl-2-thiouridine-tRNA biosynthesis. It participates in cofactor biosynthesis; molybdopterin biosynthesis. Plays a central role in 2-thiolation of mcm(5)S(2)U at tRNA wobble positions of cytosolic tRNA(Lys), tRNA(Glu) and tRNA(Gln). Also essential during biosynthesis of the molybdenum cofactor. Acts by mediating the C-terminal thiocarboxylation of sulfur carriers URM1 and MOCS2A. Its N-terminus first activates URM1 and MOCS2A as acyl-adenylates (-COAMP), then the persulfide sulfur on the catalytic cysteine is transferred to URM1 and MOCS2A to form thiocarboxylation (-COSH) of their C-terminus. The reaction probably involves hydrogen sulfide that is generated from the persulfide intermediate and that acts as a nucleophile towards URM1 and MOCS2A. Subsequently, a transient disulfide bond is formed. Does not use thiosulfate as sulfur donor; NFS1 probably acting as a sulfur donor for thiocarboxylation reactions. The chain is Adenylyltransferase and sulfurtransferase MOCS3-1 from Drosophila pseudoobscura pseudoobscura (Fruit fly).